A 340-amino-acid chain; its full sequence is Tetraacyldisaccharide 4'-kinase (340 aa).

An ATP-binding site is contributed by 51–58; the sequence is HMGGAGKT.

Belongs to the LpxK family.

The enzyme catalyses a lipid A disaccharide + ATP = a lipid IVA + ADP + H(+). The protein operates within glycolipid biosynthesis; lipid IV(A) biosynthesis; lipid IV(A) from (3R)-3-hydroxytetradecanoyl-[acyl-carrier-protein] and UDP-N-acetyl-alpha-D-glucosamine: step 6/6. Transfers the gamma-phosphate of ATP to the 4'-position of a tetraacyldisaccharide 1-phosphate intermediate (termed DS-1-P) to form tetraacyldisaccharide 1,4'-bis-phosphate (lipid IVA). The sequence is that of Tetraacyldisaccharide 4'-kinase from Rhodopseudomonas palustris (strain TIE-1).